The primary structure comprises 121 residues: UPF0295 protein OB0906 (121 aa).

The next 2 membrane-spanning stretches (helical) occupy residues 14 to 34 and 43 to 63; these read IRTF…GGIL and VIFF…YVWI.

It belongs to the UPF0295 family.

It is found in the cell membrane. The polypeptide is UPF0295 protein OB0906 (Oceanobacillus iheyensis (strain DSM 14371 / CIP 107618 / JCM 11309 / KCTC 3954 / HTE831)).